The chain runs to 206 residues: Protein YmaB (206 aa).

This is Protein YmaB (ymaB) from Bacillus subtilis (strain 168).